Reading from the N-terminus, the 172-residue chain is Co-chaperone protein HscB (172 aa).

The J domain maps to 2–74; that stretch reads DYFTLFGLPI…LKRAEYMLSL (73 aa).

This sequence belongs to the HscB family. In terms of assembly, interacts with HscA and stimulates its ATPase activity. Interacts with IscU.

In terms of biological role, co-chaperone involved in the maturation of iron-sulfur cluster-containing proteins. Seems to help targeting proteins to be folded toward HscA. This chain is Co-chaperone protein HscB, found in Pectobacterium atrosepticum (strain SCRI 1043 / ATCC BAA-672) (Erwinia carotovora subsp. atroseptica).